The following is a 301-amino-acid chain: MNWITNYVRPRINSMLGRREVPENLWIKCPETGEMVFHKDLESNKWVIPASGYHMKMPAKARLADLFDNGEYESLPQPKVAQDPLKFRDSKKYSDRLRDSRLKTEQEDTILAGLGKVQGLKLVAVVHEFNFIGGSLGIAAGEAIVKAFERATSEKCPLVMFPASGGARMQEGILSLMQLPRTTVAVDLLKESGQPYVVVLTNPTTGGVTASYAMLGDIHLAEPGAEIGFAGKRVIEQTLREKLPEGFQTSEYLLEHGMVDMVVKRHDIPETLARVLKILTKKPVSAANDVTRGAIALAASA.

One can recognise a CoA carboxyltransferase N-terminal domain in the interval Leu-25–Ala-294.

The protein belongs to the AccD/PCCB family. Acetyl-CoA carboxylase is a heterohexamer composed of biotin carboxyl carrier protein (AccB), biotin carboxylase (AccC) and two subunits each of ACCase subunit alpha (AccA) and ACCase subunit beta (AccD).

The protein localises to the cytoplasm. The enzyme catalyses N(6)-carboxybiotinyl-L-lysyl-[protein] + acetyl-CoA = N(6)-biotinyl-L-lysyl-[protein] + malonyl-CoA. It participates in lipid metabolism; malonyl-CoA biosynthesis; malonyl-CoA from acetyl-CoA: step 1/1. Its function is as follows. Component of the acetyl coenzyme A carboxylase (ACC) complex. Biotin carboxylase (BC) catalyzes the carboxylation of biotin on its carrier protein (BCCP) and then the CO(2) group is transferred by the transcarboxylase to acetyl-CoA to form malonyl-CoA. This chain is Acetyl-coenzyme A carboxylase carboxyl transferase subunit beta, found in Rhizobium etli (strain ATCC 51251 / DSM 11541 / JCM 21823 / NBRC 15573 / CFN 42).